Here is a 55-residue protein sequence, read N- to C-terminus: MPQLNPNPWFFTMLTTWLTFLLLIQPKLLSFIMTNPPINKSSKHTKTPSWTWPWT.

Residues 10-32 form a helical membrane-spanning segment; that stretch reads FFTMLTTWLTFLLLIQPKLLSFI.

The protein belongs to the ATPase protein 8 family. In terms of assembly, component of the ATP synthase complex composed at least of ATP5F1A/subunit alpha, ATP5F1B/subunit beta, ATP5MC1/subunit c (homooctomer), MT-ATP6/subunit a, MT-ATP8/subunit 8, ATP5ME/subunit e, ATP5MF/subunit f, ATP5MG/subunit g, ATP5MK/subunit k, ATP5MJ/subunit j, ATP5F1C/subunit gamma, ATP5F1D/subunit delta, ATP5F1E/subunit epsilon, ATP5PF/subunit F6, ATP5PB/subunit b, ATP5PD/subunit d, ATP5PO/subunit OSCP. ATP synthase complex consists of a soluble F(1) head domain (subunits alpha(3) and beta(3)) - the catalytic core - and a membrane F(0) domain - the membrane proton channel (subunits c, a, 8, e, f, g, k and j). These two domains are linked by a central stalk (subunits gamma, delta, and epsilon) rotating inside the F1 region and a stationary peripheral stalk (subunits F6, b, d, and OSCP).

The protein resides in the mitochondrion membrane. In terms of biological role, subunit 8, of the mitochondrial membrane ATP synthase complex (F(1)F(0) ATP synthase or Complex V) that produces ATP from ADP in the presence of a proton gradient across the membrane which is generated by electron transport complexes of the respiratory chain. ATP synthase complex consist of a soluble F(1) head domain - the catalytic core - and a membrane F(1) domain - the membrane proton channel. These two domains are linked by a central stalk rotating inside the F(1) region and a stationary peripheral stalk. During catalysis, ATP synthesis in the catalytic domain of F(1) is coupled via a rotary mechanism of the central stalk subunits to proton translocation. In vivo, can only synthesize ATP although its ATP hydrolase activity can be activated artificially in vitro. Part of the complex F(0) domain. The chain is ATP synthase F(0) complex subunit 8 from Guira guira (Guira cuckoo).